The primary structure comprises 1896 residues: Plexin-A1 (1896 aa).

The first 26 residues, 1–26 (MPLPPRSLQVLLLLLLLLLLLPGMWA), serve as a signal peptide directing secretion. Residues 27–512 (EAGLPRAGGG…TEKQVTRVPV (486 aa)) enclose the Sema domain. The Extracellular segment spans residues 27-1244 (EAGLPRAGGG…VYSDSLLTLP (1218 aa)). N77 is a glycosylation site (N-linked (GlcNAc...) asparagine). 10 disulfides stabilise this stretch: C95–C104, C130–C138, C286–C407, C302–C358, C376–C395, C515–C532, C521–C563, C524–C541, C535–C547, and C598–C617. N-linked (GlcNAc...) asparagine glycans are attached at residues N660, N672, and N701. IPT/TIG domains follow at residues 864-959 (PKIL…FTFV), 961-1045 (PTFY…YNYT), 1048-1147 (PTIL…FLYY), and 1150-1236 (PVLE…LQVY). N1043 carries N-linked (GlcNAc...) asparagine glycosylation. N-linked (GlcNAc...) asparagine glycosylation is found at N1187 and N1212. A helical membrane pass occupies residues 1245-1265 (AIVGIGGGGGLLLLVIVAVLI). The stretch at 1264–1317 (LIAYKRKSRDADRTLKRLQLQMDNLESRVALECKEAFAELQTDIHELTNDLDGA) forms a coiled coil. Residues 1266-1896 (AYKRKSRDAD…QVVDTMALSS (631 aa)) lie on the Cytoplasmic side of the membrane.

This sequence belongs to the plexin family. In terms of assembly, interacts directly with NRP1 and NRP2. Interacts with PLXN1B. Interacts with FARP2, RND1 and KDR/VEGFR2. Binding of SEMA3A leads to dissociation of FARP2. Interacts with CRMP1, DPYSL2/CRMP2, DPYSL3/CRMP3 and DPYSL4/CRMP4. Interacts (via TIG domains) with TREM2; the interaction mediates SEMA6D binding and signaling through TYROBP. In terms of tissue distribution, detected in fetal brain, lung, liver and kidney.

Its subcellular location is the cell membrane. In terms of biological role, coreceptor for SEMA3A, SEMA3C, SEMA3F and SEMA6D. Necessary for signaling by class 3 semaphorins and subsequent remodeling of the cytoskeleton. Plays a role in axon guidance, invasive growth and cell migration. Class 3 semaphorins bind to a complex composed of a neuropilin and a plexin. The plexin modulates the affinity of the complex for specific semaphorins, and its cytoplasmic domain is required for the activation of down-stream signaling events in the cytoplasm. Acts as coreceptor of TREM2 for SEMA6D in dendritic cells and is involved in the generation of immune responses and skeletal homeostasis. The polypeptide is Plexin-A1 (Homo sapiens (Human)).